A 639-amino-acid polypeptide reads, in one-letter code: Protein argonaute (639 aa).

An N-terminal domain region spans residues 1-100 (MYLNLYKIDI…YIKKLFLDND (100 aa)). The segment at 101 to 153 (FYFKKGNNFISNSEVFSLDSNENVNAHLTYKIKIHNISNEYYLSILPKFTFLS) is linker L1. Residues 154 to 209 (KEPALESAIKSGYLYNIKSGKSFPYISGLDGILKIDIGNNQIVEVAYPENYLFNFT) are PAZ domain. Positions 210–292 (TRDAEKYGFS…KYSFYKNEQP (83 aa)) are linker L2. A mid domain region spans residues 293 to 424 (LKAIFFFSSK…YVYKMGNFIP (132 aa)). The PIWI domain stretch occupies residues 425-639 (ECKPFILKKM…DYEWKLYIPY (215 aa)). Residues Asp-446, Glu-482, Asp-516, and Asn-624 contribute to the active site. Residue Asp-446 coordinates Mn(2+). 2 residues coordinate Mn(2+): Asp-516 and Asn-624.

Belongs to the argonaute family. Long pAgo subfamily. The cofactor is Mn(2+).

The protein localises to the cytoplasm. An RNA-guided ssDNA endonuclease that may play a role in defense against invading mobile genetic elements. Uses short 5'-OH-ssRNA sequences as guides (gRNA) to bind complementary target DNA (tDNA) or target RNA resulting in target cleavage. The cleavage site is 10 nucleotides (nt) downstream of the target residue base-paired with the 5'-end of the gRNA. Reaction rates are fastest on 5'-OH-gRNA:tDNA followed by 5'-OH-gRNA:target RNA. gRNA between 17-21 nt supports equivalent rates of cleavage, has no preferred 5'-nt. Has weak activity on tDNA with 5'-phospho-gRNA, yielding products 1-2 nt longer. Unlike other characterized prokaryotic Ago proteins symmetric mismatches centered around the cleavage site reduce cleavage efficiency. The chain is Protein argonaute from Marinitoga piezophila (strain DSM 14283 / JCM 11233 / KA3).